The following is a 503-amino-acid chain: ATP synthase subunit alpha (503 aa).

170–177 contributes to the ATP binding site; it reads GDRQTGKT.

The protein belongs to the ATPase alpha/beta chains family. F-type ATPases have 2 components, CF(1) - the catalytic core - and CF(0) - the membrane proton channel. CF(1) has five subunits: alpha(3), beta(3), gamma(1), delta(1), epsilon(1). CF(0) has three main subunits: a(1), b(2) and c(9-12). The alpha and beta chains form an alternating ring which encloses part of the gamma chain. CF(1) is attached to CF(0) by a central stalk formed by the gamma and epsilon chains, while a peripheral stalk is formed by the delta and b chains.

Its subcellular location is the cell inner membrane. The enzyme catalyses ATP + H2O + 4 H(+)(in) = ADP + phosphate + 5 H(+)(out). Its function is as follows. Produces ATP from ADP in the presence of a proton gradient across the membrane. The alpha chain is a regulatory subunit. The sequence is that of ATP synthase subunit alpha from Geobacter metallireducens (strain ATCC 53774 / DSM 7210 / GS-15).